The sequence spans 196 residues: Small ribosomal subunit protein uS4c (196 aa).

Residues 15-43 (LGALPGLTRKTPKSGSNQKKKFHSGKKEQ) are disordered. An S4 RNA-binding domain is found at 89-150 (MRLDNILFRL…NQRSKRLVQN (62 aa)).

This sequence belongs to the universal ribosomal protein uS4 family. As to quaternary structure, part of the 30S ribosomal subunit. Contacts protein S5. The interaction surface between S4 and S5 is involved in control of translational fidelity.

Its subcellular location is the plastid. It is found in the chloroplast. Its function is as follows. One of the primary rRNA binding proteins, it binds directly to 16S rRNA where it nucleates assembly of the body of the 30S subunit. With S5 and S12 plays an important role in translational accuracy. The polypeptide is Small ribosomal subunit protein uS4c (rps4) (Bothriochloa ischaemum (Yellow bluestem)).